Reading from the N-terminus, the 106-residue chain is Nucleoid-associated protein Noc_2594 (106 aa).

Disordered regions lie at residues 1–20 (MKGGLGNLMKQAQQLQSNME) and 85–106 (QSKEKMSSMTSGMLPPGFKLPL). Positions 10 to 20 (KQAQQLQSNME) are enriched in polar residues.

It belongs to the YbaB/EbfC family. Homodimer.

Its subcellular location is the cytoplasm. It localises to the nucleoid. Its function is as follows. Binds to DNA and alters its conformation. May be involved in regulation of gene expression, nucleoid organization and DNA protection. The protein is Nucleoid-associated protein Noc_2594 of Nitrosococcus oceani (strain ATCC 19707 / BCRC 17464 / JCM 30415 / NCIMB 11848 / C-107).